Consider the following 319-residue polypeptide: 4-hydroxy-3-methylbut-2-enyl diphosphate reductase (319 aa).

Position 17 (Cys17) interacts with [4Fe-4S] cluster. (2E)-4-hydroxy-3-methylbut-2-enyl diphosphate contacts are provided by His46 and His79. Dimethylallyl diphosphate-binding residues include His46 and His79. The isopentenyl diphosphate site is built by His46 and His79. Residue Cys101 participates in [4Fe-4S] cluster binding. His129 contributes to the (2E)-4-hydroxy-3-methylbut-2-enyl diphosphate binding site. His129 contacts dimethylallyl diphosphate. His129 provides a ligand contact to isopentenyl diphosphate. Glu131 serves as the catalytic Proton donor. Position 170 (Thr170) interacts with (2E)-4-hydroxy-3-methylbut-2-enyl diphosphate. Cys200 serves as a coordination point for [4Fe-4S] cluster. The (2E)-4-hydroxy-3-methylbut-2-enyl diphosphate site is built by Ser228, Ser229, Asn230, and Ser273. The dimethylallyl diphosphate site is built by Ser228, Ser229, Asn230, and Ser273. Residues Ser228, Ser229, Asn230, and Ser273 each contribute to the isopentenyl diphosphate site.

Belongs to the IspH family. [4Fe-4S] cluster is required as a cofactor.

It carries out the reaction isopentenyl diphosphate + 2 oxidized [2Fe-2S]-[ferredoxin] + H2O = (2E)-4-hydroxy-3-methylbut-2-enyl diphosphate + 2 reduced [2Fe-2S]-[ferredoxin] + 2 H(+). It catalyses the reaction dimethylallyl diphosphate + 2 oxidized [2Fe-2S]-[ferredoxin] + H2O = (2E)-4-hydroxy-3-methylbut-2-enyl diphosphate + 2 reduced [2Fe-2S]-[ferredoxin] + 2 H(+). It functions in the pathway isoprenoid biosynthesis; dimethylallyl diphosphate biosynthesis; dimethylallyl diphosphate from (2E)-4-hydroxy-3-methylbutenyl diphosphate: step 1/1. The protein operates within isoprenoid biosynthesis; isopentenyl diphosphate biosynthesis via DXP pathway; isopentenyl diphosphate from 1-deoxy-D-xylulose 5-phosphate: step 6/6. In terms of biological role, catalyzes the conversion of 1-hydroxy-2-methyl-2-(E)-butenyl 4-diphosphate (HMBPP) into a mixture of isopentenyl diphosphate (IPP) and dimethylallyl diphosphate (DMAPP). Acts in the terminal step of the DOXP/MEP pathway for isoprenoid precursor biosynthesis. The protein is 4-hydroxy-3-methylbut-2-enyl diphosphate reductase of Cereibacter sphaeroides (strain ATCC 17025 / ATH 2.4.3) (Rhodobacter sphaeroides).